A 179-amino-acid chain; its full sequence is Putative ankyrin repeat protein RF_0922 (179 aa).

ANK repeat units lie at residues 5-34 (KGCTALTWAVDKGLEKVCEILIPNMSEQAI), 40-72 (NGSTALTLAAWKGLEKICRLLIPKMSPQAINHV), 75-104 (NGNTALTLAAWKGLEKICELLIPKMSSQAI), 110-139 (NGDTALTLAAWKGLEKICEMLIPKMSEQAI), and 145-174 (NGNTALTLAADKSLEKICEMLIPKMSKQAI).

This is Putative ankyrin repeat protein RF_0922 from Rickettsia felis (strain ATCC VR-1525 / URRWXCal2) (Rickettsia azadi).